Here is an 833-residue protein sequence, read N- to C-terminus: Protein translocase subunit SecA (833 aa).

ATP is bound by residues Q87, 105 to 109, and D494; that span reads GEGKT. The tract at residues 789 to 816 is disordered; it reads PAAVAYSGGEAEAGPAQPHREDPKVGRN. Basic and acidic residues predominate over residues 806–815; it reads PHREDPKVGR. The Zn(2+) site is built by C819, C821, C830, and C831.

It belongs to the SecA family. In terms of assembly, monomer and homodimer. Part of the essential Sec protein translocation apparatus which comprises SecA, SecYEG and auxiliary proteins SecDF-YajC and YidC. It depends on Zn(2+) as a cofactor.

It localises to the cell inner membrane. The protein resides in the cytoplasm. The enzyme catalyses ATP + H2O + cellular proteinSide 1 = ADP + phosphate + cellular proteinSide 2.. Functionally, part of the Sec protein translocase complex. Interacts with the SecYEG preprotein conducting channel. Has a central role in coupling the hydrolysis of ATP to the transfer of proteins into and across the cell membrane, serving as an ATP-driven molecular motor driving the stepwise translocation of polypeptide chains across the membrane. This chain is Protein translocase subunit SecA, found in Nitratidesulfovibrio vulgaris (strain ATCC 29579 / DSM 644 / CCUG 34227 / NCIMB 8303 / VKM B-1760 / Hildenborough) (Desulfovibrio vulgaris).